Consider the following 171-residue polypeptide: Endoribonuclease YbeY (171 aa).

Zn(2+) contacts are provided by His126, His130, and His136.

It belongs to the endoribonuclease YbeY family. Zn(2+) is required as a cofactor.

It localises to the cytoplasm. Its function is as follows. Single strand-specific metallo-endoribonuclease involved in late-stage 70S ribosome quality control and in maturation of the 3' terminus of the 16S rRNA. This Rhizobium etli (strain CIAT 652) protein is Endoribonuclease YbeY.